A 197-amino-acid polypeptide reads, in one-letter code: Xanthine phosphoribosyltransferase (197 aa).

The xanthine site is built by L20 and N27. 128-132 (ANGQA) provides a ligand contact to 5-phospho-alpha-D-ribose 1-diphosphate. K156 is a xanthine binding site.

It belongs to the purine/pyrimidine phosphoribosyltransferase family. Xpt subfamily. In terms of assembly, homodimer.

The protein resides in the cytoplasm. It carries out the reaction XMP + diphosphate = xanthine + 5-phospho-alpha-D-ribose 1-diphosphate. It functions in the pathway purine metabolism; XMP biosynthesis via salvage pathway; XMP from xanthine: step 1/1. Converts the preformed base xanthine, a product of nucleic acid breakdown, to xanthosine 5'-monophosphate (XMP), so it can be reused for RNA or DNA synthesis. This Bacillus cereus (strain ATCC 10987 / NRS 248) protein is Xanthine phosphoribosyltransferase.